The primary structure comprises 859 residues: DNA mismatch repair protein MutS (859 aa).

622 to 629 (GPNMGGKS) serves as a coordination point for ATP.

It belongs to the DNA mismatch repair MutS family.

In terms of biological role, this protein is involved in the repair of mismatches in DNA. It is possible that it carries out the mismatch recognition step. This protein has a weak ATPase activity. The chain is DNA mismatch repair protein MutS from Coxiella burnetii (strain Dugway 5J108-111).